A 270-amino-acid chain; its full sequence is Formamidopyrimidine-DNA glycosylase (270 aa).

Pro2 acts as the Schiff-base intermediate with DNA in catalysis. Glu3 acts as the Proton donor in catalysis. Lys58 (proton donor; for beta-elimination activity) is an active-site residue. Positions 91, 110, and 151 each coordinate DNA. The FPG-type zinc-finger motif lies at 236–270 (FVYGRGGQPCKVCGTELREVKLGQRASVYCPRCQR). The Proton donor; for delta-elimination activity role is filled by Arg260.

It belongs to the FPG family. As to quaternary structure, monomer. Zn(2+) is required as a cofactor.

The catalysed reaction is Hydrolysis of DNA containing ring-opened 7-methylguanine residues, releasing 2,6-diamino-4-hydroxy-5-(N-methyl)formamidopyrimidine.. It catalyses the reaction 2'-deoxyribonucleotide-(2'-deoxyribose 5'-phosphate)-2'-deoxyribonucleotide-DNA = a 3'-end 2'-deoxyribonucleotide-(2,3-dehydro-2,3-deoxyribose 5'-phosphate)-DNA + a 5'-end 5'-phospho-2'-deoxyribonucleoside-DNA + H(+). Involved in base excision repair of DNA damaged by oxidation or by mutagenic agents. Acts as a DNA glycosylase that recognizes and removes damaged bases. Has a preference for oxidized purines, such as 7,8-dihydro-8-oxoguanine (8-oxoG). Has AP (apurinic/apyrimidinic) lyase activity and introduces nicks in the DNA strand. Cleaves the DNA backbone by beta-delta elimination to generate a single-strand break at the site of the removed base with both 3'- and 5'-phosphates. The polypeptide is Formamidopyrimidine-DNA glycosylase (Pseudomonas putida (strain ATCC 700007 / DSM 6899 / JCM 31910 / BCRC 17059 / LMG 24140 / F1)).